A 616-amino-acid chain; its full sequence is Protein LNK1 (616 aa).

4 disordered regions span residues 72–112, 361–398, 410–434, and 567–616; these read GKNP…HGFN, ESKS…GPTV, ANLL…KTDS, and SSLS…SDNN. Polar residues predominate over residues 371 to 395; the sequence is KPSPSSASNESYTSNHAQSIESLQG. Residues 567–577 are compositionally biased toward low complexity; that stretch reads SSLSSDNNVLS. Positions 594 to 608 are enriched in basic and acidic residues; the sequence is RIEKQEETTELRPEA.

Interacts with CCA1, LHY, REV4 and REV8, but not with PRR7 or PRR9. In terms of tissue distribution, expressed in roots, stems, leaves, seedlings, cotyledons, inflorescences and siliques. Highest expression in root tips, young leaves and vasculatur tissues.

The protein localises to the nucleus. Functionally, transcriptional coactivator necessary for expression of the clock genes PRR5 and TOC1. Antagonizes REV8 function in the regulation of anthocyanin accumulation. Involved in red light input to the clock. Activates clock-controlled genes with afternoon peak. Mediates light inhibition of hypocotyl elongation. The chain is Protein LNK1 from Arabidopsis thaliana (Mouse-ear cress).